Here is a 94-residue protein sequence, read N- to C-terminus: Small ribosomal subunit protein bS20c (94 aa).

It belongs to the bacterial ribosomal protein bS20 family.

It is found in the plastid. The protein resides in the chloroplast. Binds directly to 16S ribosomal RNA. This Porphyra purpurea (Red seaweed) protein is Small ribosomal subunit protein bS20c.